A 784-amino-acid polypeptide reads, in one-letter code: E3 UFM1-protein ligase 1 homolog (784 aa).

A compositionally biased stretch (basic and acidic residues) spans 398–414 (QEVDHGVMEEEKADKRE). The disordered stretch occupies residues 398 to 472 (QEVDHGVMEE…ASNKKGGKDP (75 aa)).

The protein belongs to the UFL1 family.

In terms of biological role, E3 UFM1-protein ligase that mediates ufmylation of target proteins. The protein is E3 UFM1-protein ligase 1 homolog of Anopheles gambiae (African malaria mosquito).